A 106-amino-acid polypeptide reads, in one-letter code: Protein RnfH (106 aa).

Belongs to the UPF0125 (RnfH) family.

The polypeptide is Protein RnfH (Ectopseudomonas mendocina (strain ymp) (Pseudomonas mendocina)).